Here is a 256-residue protein sequence, read N- to C-terminus: GTP cyclohydrolase FolE2 (256 aa).

Belongs to the GTP cyclohydrolase IV family.

It carries out the reaction GTP + H2O = 7,8-dihydroneopterin 3'-triphosphate + formate + H(+). It participates in cofactor biosynthesis; 7,8-dihydroneopterin triphosphate biosynthesis; 7,8-dihydroneopterin triphosphate from GTP: step 1/1. In terms of biological role, converts GTP to 7,8-dihydroneopterin triphosphate. The chain is GTP cyclohydrolase FolE2 from Caldicellulosiruptor saccharolyticus (strain ATCC 43494 / DSM 8903 / Tp8T 6331).